The following is a 445-amino-acid chain: Signal recognition particle 54 kDa protein (445 aa).

Residues 102–109 (GVQGSGKT), 184–188 (DTAGR), and 244–247 (TKMD) each bind GTP.

The protein belongs to the GTP-binding SRP family. SRP54 subfamily. Part of the signal recognition particle protein translocation system, which is composed of SRP and FtsY. Archaeal SRP consists of a 7S RNA molecule of 300 nucleotides and two protein subunits: SRP54 and SRP19.

It localises to the cytoplasm. The catalysed reaction is GTP + H2O = GDP + phosphate + H(+). Involved in targeting and insertion of nascent membrane proteins into the cytoplasmic membrane. Binds to the hydrophobic signal sequence of the ribosome-nascent chain (RNC) as it emerges from the ribosomes. The SRP-RNC complex is then targeted to the cytoplasmic membrane where it interacts with the SRP receptor FtsY. The protein is Signal recognition particle 54 kDa protein of Sulfurisphaera tokodaii (strain DSM 16993 / JCM 10545 / NBRC 100140 / 7) (Sulfolobus tokodaii).